The primary structure comprises 245 residues: 1-(5-phosphoribosyl)-5-[(5-phosphoribosylamino)methylideneamino] imidazole-4-carboxamide isomerase (245 aa).

The Proton acceptor role is filled by Asp7. Asp129 (proton donor) is an active-site residue.

Belongs to the HisA/HisF family.

It localises to the cytoplasm. The enzyme catalyses 1-(5-phospho-beta-D-ribosyl)-5-[(5-phospho-beta-D-ribosylamino)methylideneamino]imidazole-4-carboxamide = 5-[(5-phospho-1-deoxy-D-ribulos-1-ylimino)methylamino]-1-(5-phospho-beta-D-ribosyl)imidazole-4-carboxamide. It functions in the pathway amino-acid biosynthesis; L-histidine biosynthesis; L-histidine from 5-phospho-alpha-D-ribose 1-diphosphate: step 4/9. The polypeptide is 1-(5-phosphoribosyl)-5-[(5-phosphoribosylamino)methylideneamino] imidazole-4-carboxamide isomerase (Buchnera aphidicola subsp. Cinara cedri (strain Cc)).